Here is a 366-residue protein sequence, read N- to C-terminus: uncharacterized protein (366 aa).

Residues 64–289 form the OBG-type G domain; it reads GTVGFIGFPS…LKETMWDYLN (226 aa). GTP-binding positions include 70-77, 116-120, and 247-250; these read GFPSVGKS, DLPGI, and NKID. The TGS domain maps to 289–365; the sequence is NLVRVYTRPR…LDEDVVTIVK (77 aa).

Belongs to the TRAFAC class OBG-HflX-like GTPase superfamily. OBG GTPase family.

This is an uncharacterized protein from Schizosaccharomyces pombe (strain 972 / ATCC 24843) (Fission yeast).